The sequence spans 62 residues: Large ribosomal subunit protein bL28 (62 aa).

It belongs to the bacterial ribosomal protein bL28 family.

This chain is Large ribosomal subunit protein bL28, found in Moorella thermoacetica (strain ATCC 39073 / JCM 9320).